The primary structure comprises 270 residues: 4-hydroxy-tetrahydrodipicolinate reductase (270 aa).

NAD(+)-binding positions include 11 to 16 and Glu-37; that span reads GASGRM. NADP(+) is bound at residue Arg-38. NAD(+) contacts are provided by residues 101 to 103 and 125 to 128; these read GTT and APNM. Catalysis depends on His-158, which acts as the Proton donor/acceptor. His-159 lines the (S)-2,3,4,5-tetrahydrodipicolinate pocket. Catalysis depends on Lys-162, which acts as the Proton donor. A (S)-2,3,4,5-tetrahydrodipicolinate-binding site is contributed by 168-169; the sequence is GT.

It belongs to the DapB family.

The protein localises to the cytoplasm. The enzyme catalyses (S)-2,3,4,5-tetrahydrodipicolinate + NAD(+) + H2O = (2S,4S)-4-hydroxy-2,3,4,5-tetrahydrodipicolinate + NADH + H(+). It carries out the reaction (S)-2,3,4,5-tetrahydrodipicolinate + NADP(+) + H2O = (2S,4S)-4-hydroxy-2,3,4,5-tetrahydrodipicolinate + NADPH + H(+). The protein operates within amino-acid biosynthesis; L-lysine biosynthesis via DAP pathway; (S)-tetrahydrodipicolinate from L-aspartate: step 4/4. Its function is as follows. Catalyzes the conversion of 4-hydroxy-tetrahydrodipicolinate (HTPA) to tetrahydrodipicolinate. The sequence is that of 4-hydroxy-tetrahydrodipicolinate reductase from Shewanella frigidimarina (strain NCIMB 400).